Here is a 425-residue protein sequence, read N- to C-terminus: Enolase (425 aa).

Gln-170 lines the (2R)-2-phosphoglycerate pocket. Glu-214 acts as the Proton donor in catalysis. Mg(2+) contacts are provided by Asp-250, Glu-291, and Asp-317. (2R)-2-phosphoglycerate-binding residues include Lys-342, Arg-371, Ser-372, and Lys-393. The active-site Proton acceptor is Lys-342.

It belongs to the enolase family. Requires Mg(2+) as cofactor.

It localises to the cytoplasm. Its subcellular location is the secreted. The protein localises to the cell surface. It catalyses the reaction (2R)-2-phosphoglycerate = phosphoenolpyruvate + H2O. Its pathway is carbohydrate degradation; glycolysis; pyruvate from D-glyceraldehyde 3-phosphate: step 4/5. Functionally, catalyzes the reversible conversion of 2-phosphoglycerate (2-PG) into phosphoenolpyruvate (PEP). It is essential for the degradation of carbohydrates via glycolysis. The sequence is that of Enolase from Methanococcoides burtonii (strain DSM 6242 / NBRC 107633 / OCM 468 / ACE-M).